A 560-amino-acid polypeptide reads, in one-letter code: Endogenous retrovirus group K member 18 Env polyprotein (560 aa).

A fusion peptide region spans residues 355–375 (FIFTLIAVIMGLIAVTATAAV). Residues 522 to 542 (IRSTMIINLILIVVCLFCLLL) form a helical membrane-spanning segment.

Belongs to the beta type-B retroviral envelope protein family. HERV class-II K(HML-2) env subfamily. In terms of assembly, the surface (SU) and transmembrane (TM) proteins form a heterodimer. SU and TM are attached by noncovalent interactions or by a labile interchain disulfide bond. Specific enzymatic cleavages in vivo yield the mature SU and TM proteins. Expressed at higher level in the thymus. Expressed at lower level in peripheral blood lymphocytes.

Its subcellular location is the cell membrane. The protein resides in the virion. Retroviral envelope proteins mediate receptor recognition and membrane fusion during early infection. Endogenous envelope proteins may have kept, lost or modified their original function during evolution. This envelope protein has superantigenic properties. In terms of biological role, SU mediates receptor recognition. Its function is as follows. TM anchors the envelope heterodimer to the viral membrane through one transmembrane domain. The other hydrophobic domain, called fusion peptide, mediates fusion of the viral membrane with the target cell membrane. In Homo sapiens (Human), this protein is Endogenous retrovirus group K member 18 Env polyprotein (ERVK-18).